The sequence spans 486 residues: MSLEDSLRSLSLDYLNLLINGQAFSDVTFSVEGRLVHAHRCILAARSLFFRKFFCGGSDPSASSGLIDQTGIRVNPSGSPRSSNGVLVIPVNSVGYEVFLLLLQFLYSGQVSIVPQKHEARPNCGERGCWHTHCSSAVDLALDTLAAARYFGVEQLALLTQKQLASMVEKASIEDVMKVLLASRKQDMQQLWTTCSHLVAKSGLPPEVLAKHLPIEIVAKIEELRLKSSIARRSMMPHHHHHHHQHDLNAAADLEDQKIRRMRRALDSSDVELVKLMVMGEGLNLDEALALHYAVENCSREVVKALLELGAADVNYPAGPAGKTPLHIAAEMVSPDMVAVLLDHHADPNVRTVDNVTPLDILRTLTSDFLFKGAIPGLTHIEPNKLRLCLELVQSAALVLSREEGNANNNPPSSTTTTLPMYHHPMNDDHNSSSSSGNNHNIANLNLDSRLVYLNLGATVGSGQMSDDHGGRHGDPAMYHHSHHDY.

The BTB domain occupies 25-115 (SDVTFSVEGR…LYSGQVSIVP (91 aa)). Residues 121–135 (RPNCGERGCWHTHCS) form a C2HC NPR-type zinc finger. C124, C129, H131, and C134 together coordinate Zn(2+). ANK repeat units lie at residues 257 to 286 (QKIR…LNLD), 287 to 316 (EALA…DVNY), 321 to 350 (AGKT…DPNV), and 354 to 388 (DNVT…KLRL). Disordered regions lie at residues 403–441 (EEGN…NNHN) and 464–486 (QMSD…HHDY). Low complexity-rich tracts occupy residues 406–418 (NANN…TTTT) and 432–441 (SSSSSGNNHN). Basic and acidic residues predominate over residues 466–475 (SDDHGGRHGD).

Belongs to the plant 'ANKYRIN-BTB/POZ' family. 'NOOT-BOP-COCH-like' (NBCL) subfamily. Homodimer.

The protein resides in the nucleus. Its subcellular location is the cytoplasm. It is found in the cell membrane. It functions in the pathway protein modification; protein ubiquitination. Functionally, may act as a substrate-specific adapter of an E3 ubiquitin-protein ligase complex (CUL3-RBX1-BTB) which mediates the ubiquitination and subsequent proteasomal degradation of target proteins. Transcriptional co-regulator involved in the promotion of leaf and floral meristem fate and determinacy. Necessary for the development of stipules at the base of petioles. Required for the abscission of senescent organs, probably by regulating the cell wall disorganization in abscission zones (AZs, e.g. pulvini at the base of leaves). Promotes slightly root-cap border cells separation from the root tip. Involved in the coordination of the symbiotic nodule developmental program; promotes the formation of root nodules by interacting directly with APP1 to modulate the expression of the nuclear transcription factor Y subunit (NF-YA1), a key nodulin. Necessary for the robust maintenance of nodule identity throughout the nodule developmental program. The protein is BTB/POZ domain and ankyrin repeat-containing protein NBCL of Lupinus angustifolius (Narrow-leaved blue lupine).